A 744-amino-acid chain; its full sequence is Phosphoribosylformylglycinamidine synthase subunit PurL (744 aa).

Residue histidine 50 is part of the active site. Residues tyrosine 53 and lysine 92 each coordinate ATP. Glutamate 94 serves as a coordination point for Mg(2+). Substrate contacts are provided by residues 95 to 98 (SHNH) and arginine 117. Histidine 96 (proton acceptor) is an active-site residue. Position 118 (aspartate 118) interacts with Mg(2+). Glutamine 241 contacts substrate. Aspartate 269 provides a ligand contact to Mg(2+). Residue 313–315 (ESQ) participates in substrate binding. ATP is bound by residues aspartate 494 and glycine 531. Residue asparagine 532 coordinates Mg(2+). Serine 534 is a substrate binding site.

It belongs to the FGAMS family. Monomer. Part of the FGAM synthase complex composed of 1 PurL, 1 PurQ and 2 PurS subunits.

Its subcellular location is the cytoplasm. The catalysed reaction is N(2)-formyl-N(1)-(5-phospho-beta-D-ribosyl)glycinamide + L-glutamine + ATP + H2O = 2-formamido-N(1)-(5-O-phospho-beta-D-ribosyl)acetamidine + L-glutamate + ADP + phosphate + H(+). It functions in the pathway purine metabolism; IMP biosynthesis via de novo pathway; 5-amino-1-(5-phospho-D-ribosyl)imidazole from N(2)-formyl-N(1)-(5-phospho-D-ribosyl)glycinamide: step 1/2. Part of the phosphoribosylformylglycinamidine synthase complex involved in the purines biosynthetic pathway. Catalyzes the ATP-dependent conversion of formylglycinamide ribonucleotide (FGAR) and glutamine to yield formylglycinamidine ribonucleotide (FGAM) and glutamate. The FGAM synthase complex is composed of three subunits. PurQ produces an ammonia molecule by converting glutamine to glutamate. PurL transfers the ammonia molecule to FGAR to form FGAM in an ATP-dependent manner. PurS interacts with PurQ and PurL and is thought to assist in the transfer of the ammonia molecule from PurQ to PurL. This chain is Phosphoribosylformylglycinamidine synthase subunit PurL, found in Chelativorans sp. (strain BNC1).